The sequence spans 478 residues: ATP synthase subunit beta (478 aa).

163–170 (GGAGVGKT) is a binding site for ATP.

This sequence belongs to the ATPase alpha/beta chains family. F-type ATPases have 2 components, CF(1) - the catalytic core - and CF(0) - the membrane proton channel. CF(1) has five subunits: alpha(3), beta(3), gamma(1), delta(1), epsilon(1). CF(0) has three main subunits: a(1), b(2) and c(9-12). The alpha and beta chains form an alternating ring which encloses part of the gamma chain. CF(1) is attached to CF(0) by a central stalk formed by the gamma and epsilon chains, while a peripheral stalk is formed by the delta and b chains.

The protein resides in the cell inner membrane. The enzyme catalyses ATP + H2O + 4 H(+)(in) = ADP + phosphate + 5 H(+)(out). Produces ATP from ADP in the presence of a proton gradient across the membrane. The catalytic sites are hosted primarily by the beta subunits. This chain is ATP synthase subunit beta, found in Aquifex pyrophilus.